The sequence spans 1056 residues: MPAKPQVDGHTLVDAFCCANIFTETGALKPRSDKVWMDISNQLKGAISAKTLNFYARINRNNMITVVKERCGIQQLDTSANLTLNSTFPDDDPEFQITEASKNGPLPILYFNLELDLELWRSIAPKKDQKTEKLQPNWTDTMAKLIYKKVPLPCAFNFRKAKLSDKVDNIWLRIEGYCNDCSSILKGHCLVKPDEQCGIMISVSVPDTRGIPHNKKRRCTGSRRLEIGNELILKKAALWRKEATDNMNDDDPEPSYIPNLPTLRKLREEATNRHLGITKDRDPVSSLYLKKYEGELAGCILDIGLDEFFCIYCTGTQVKTYASRIKTIRKISIDATGSVVLPIQKPNGDSSYVFLYQIVMEGDDSIFPVFQMLSAKHDTASIQFWLSRFISKSGHFPLEVVSDFSLALLNGISLSFNECRIATYIKKCFHSLLMEERTDLPPCYIRLDIAHLIKMICRKNVFKSKLPNLKDFYTRCIGLATTCETKDSFAELIKSVLIVALSQSSGEDEKGDILSSYRNEKYLLARIATFTAPDHKETIEDNCIPEDQEEIDEDVTDFISNIKIAAEEEALNCNSVNCRPNPYFLPELMPPLIKLCKYFVLWTNVMKEKFCSKYDVGSSALVEAYFKDLKNTDMSIFHRPVRADKFVVQHIRCIEAVCKLERAAMKRKTVKTPSFIKENAPKKMCSKETKGFLEEILEESEVEYLLQEENWKVKNKTIKPTEGNDAEDNDTDDENKEMDLSEQPKEKPRGKYLKKCPNVELLYNRPHRRKQDEILHNGGSMGPVWIGKQLLQFKNTCPFDSLVEILSTAYIDNFYYKSLLDDFYTDNLTIELVKKYAVEGVSSSLYCDRGLVLKSFFDEKHQIIKCDANIGSFIEKALNGVPSASSHRTHIKNNHDCRNQKYIHHRLEVIDVEKVGHLDVQEVVIPFIDEFFARTDGECKICGGQQILERQPGPHVILDIEFAMDAFHQIHHNGLPGTTTLLQVPEEILIQEKKYILSGAIEYVPAMGGEIGHYIAYCRRVIGSWEVHNDMCRQWKKFSALNTKMTLHILIYTRKN.

Positions 716–749 (KTIKPTEGNDAEDNDTDDENKEMDLSEQPKEKPR) are disordered. Residues 724-736 (NDAEDNDTDDENK) are compositionally biased toward acidic residues. Positions 737–749 (EMDLSEQPKEKPR) are enriched in basic and acidic residues.

The protein resides in the nucleus. Functionally, may be involved in the transposition of NOF-FB and other FB elements. This Drosophila melanogaster (Fruit fly) protein is 120.7 kDa protein in NOF-FB transposable element (NOF).